Reading from the N-terminus, the 328-residue chain is Cytochrome c biogenesis protein CcsA (328 aa).

8 consecutive transmembrane segments (helical) span residues 13–33, 46–66, 73–93, 101–121, 146–166, 234–254, 263–283, and 295–315; these read ISFS…LVNL, GIII…IYSG, LYES…VSYF, LNAI…SGLL, MILG…LLVI, IISL…VWAN, WDPK…YLHI, and AIVA…VNLL.

The protein belongs to the CcmF/CycK/Ccl1/NrfE/CcsA family. As to quaternary structure, may interact with Ccs1.

It localises to the plastid. It is found in the chloroplast thylakoid membrane. In terms of biological role, required during biogenesis of c-type cytochromes (cytochrome c6 and cytochrome f) at the step of heme attachment. The sequence is that of Cytochrome c biogenesis protein CcsA from Capsella bursa-pastoris (Shepherd's purse).